Here is a 223-residue protein sequence, read N- to C-terminus: Urease accessory protein UreF (223 aa).

The protein belongs to the UreF family. UreD, UreF and UreG form a complex that acts as a GTP-hydrolysis-dependent molecular chaperone, activating the urease apoprotein by helping to assemble the nickel containing metallocenter of UreC. The UreE protein probably delivers the nickel.

It is found in the cytoplasm. Functionally, required for maturation of urease via the functional incorporation of the urease nickel metallocenter. The chain is Urease accessory protein UreF from Pseudomonas paraeruginosa (strain DSM 24068 / PA7) (Pseudomonas aeruginosa (strain PA7)).